The following is a 238-amino-acid chain: 3-dehydroquinate dehydratase (238 aa).

Residues 35–37 (ELR) and Arg-70 each bind 3-dehydroquinate. The active-site Proton donor/acceptor is His-133. Lys-160 functions as the Schiff-base intermediate with substrate in the catalytic mechanism. Residues Arg-202 and Gln-225 each coordinate 3-dehydroquinate.

It belongs to the type-I 3-dehydroquinase family. Homodimer.

The enzyme catalyses 3-dehydroquinate = 3-dehydroshikimate + H2O. It functions in the pathway metabolic intermediate biosynthesis; chorismate biosynthesis; chorismate from D-erythrose 4-phosphate and phosphoenolpyruvate: step 3/7. Its function is as follows. Involved in the third step of the chorismate pathway, which leads to the biosynthesis of aromatic amino acids. Catalyzes the cis-dehydration of 3-dehydroquinate (DHQ) and introduces the first double bond of the aromatic ring to yield 3-dehydroshikimate. The protein is 3-dehydroquinate dehydratase of Staphylococcus aureus (strain bovine RF122 / ET3-1).